The chain runs to 392 residues: Succinyl-diaminopimelate desuccinylase (392 aa).

Residue His76 coordinates Zn(2+). Asp78 is an active-site residue. Zn(2+) is bound at residue Asp107. The active-site Proton acceptor is Glu143. 3 residues coordinate Zn(2+): Glu144, Glu172, and His357.

This sequence belongs to the peptidase M20A family. DapE subfamily. In terms of assembly, homodimer. Requires Zn(2+) as cofactor. It depends on Co(2+) as a cofactor.

The enzyme catalyses N-succinyl-(2S,6S)-2,6-diaminopimelate + H2O = (2S,6S)-2,6-diaminopimelate + succinate. The protein operates within amino-acid biosynthesis; L-lysine biosynthesis via DAP pathway; LL-2,6-diaminopimelate from (S)-tetrahydrodipicolinate (succinylase route): step 3/3. In terms of biological role, catalyzes the hydrolysis of N-succinyl-L,L-diaminopimelic acid (SDAP), forming succinate and LL-2,6-diaminopimelate (DAP), an intermediate involved in the bacterial biosynthesis of lysine and meso-diaminopimelic acid, an essential component of bacterial cell walls. The chain is Succinyl-diaminopimelate desuccinylase from Helicobacter hepaticus (strain ATCC 51449 / 3B1).